Here is a 312-residue protein sequence, read N- to C-terminus: Malate dehydrogenase (312 aa).

NAD(+)-binding positions include 12 to 17 and Asp-36; that span reads GAGFTG. The substrate site is built by Arg-87 and Arg-93. NAD(+)-binding positions include Asn-100 and 123–125; that span reads LTN. Asn-125 serves as a coordination point for substrate. Ser-149 is modified (phosphoserine). Residue Arg-156 participates in substrate binding. The active-site Proton acceptor is the His-180.

This sequence belongs to the LDH/MDH superfamily. MDH type 3 family.

The catalysed reaction is (S)-malate + NAD(+) = oxaloacetate + NADH + H(+). Functionally, catalyzes the reversible oxidation of malate to oxaloacetate. The polypeptide is Malate dehydrogenase (Geobacillus kaustophilus (strain HTA426)).